Consider the following 385-residue polypeptide: Probable caffeine synthase 4 (385 aa).

Residues Tyr-18, Cys-62, Asn-67, Asp-101, Leu-102, Ser-140, and Phe-141 each coordinate S-adenosyl-L-homocysteine. Caffeine is bound by residues Tyr-158, Gln-161, and Phe-162. Position 179 (Asn-179) interacts with Mg(2+). Thr-238 is a binding site for caffeine. The Mg(2+) site is built by Asp-261, Phe-263, and Asn-264. Tyr-369 serves as a coordination point for caffeine.

Belongs to the methyltransferase superfamily. Type-7 methyltransferase family. Mg(2+) is required as a cofactor. Expressed in roots, stems, young and old leaves.

The protein operates within alkaloid biosynthesis. Its function is as follows. May be involved in the biosynthesis of caffeine. The sequence is that of Probable caffeine synthase 4 from Coffea arabica (Arabian coffee).